A 2594-amino-acid chain; its full sequence is Protein sevenless (2594 aa).

2 disordered regions span residues 1 to 34 (MFWR…PKRL) and 49 to 92 (KMST…RVRR). Topologically, residues 1–2141 (MFWREDAAQQ…FVSPEKRGSL (2141 aa)) are extracellular. Low complexity predominate over residues 9-26 (QQQQQQQQQQQQQQQQQQ). N-linked (GlcNAc...) asparagine glycans are attached at residues Asn-77, Asn-401, Asn-508, Asn-532, Asn-641, Asn-667, Asn-778, Asn-797, Asn-874, and Asn-980. Fibronectin type-III domains lie at 358 to 462 (ETTQ…TPME) and 468 to 560 (APII…SPLE). In terms of domain architecture, Fibronectin type-III 3 spans 838 to 938 (PPAPRELRAL…APLATRTWPL (101 aa)). One copy of the LDL-receptor class B repeat lies at 1024 to 1066 (GLLYWTDLARDCVQRLDPFSGERELLPIFGARHLALDSAQGHL). 2 Fibronectin type-III domains span residues 1227-1317 (LAVP…QLDT) and 1324-1430 (QPRR…VQSV). N-linked (GlcNAc...) asparagine glycosylation is found at Asn-1257, Asn-1344, Asn-1382, Asn-1577, Asn-1587, Asn-1665, Asn-1752, Asn-1776, Asn-1824, Asn-1908, Asn-1966, and Asn-2088. Fibronectin type-III domains are found at residues 1711 to 1814 (TAAA…TLHT), 1821 to 1920 (APRN…SYAP), 1922 to 2010 (PPLQ…TLGD), and 2014 to 2132 (APGR…AEPF). The chain crosses the membrane as a helical span at residues 2142 to 2162 (VLAIIAPAAIVSSCVLALVLV). Topologically, residues 2163 to 2594 (RKLQKRRHRA…LYANEGISGL (432 aa)) are cytoplasmic. The Protein kinase domain occupies 2224 to 2495 (LTLLRFLGSG…KRCLSTLQAL (272 aa)). ATP-binding positions include 2230 to 2238 (LGSGAFGEV) and Lys-2257. Asp-2355 serves as the catalytic Proton acceptor. At Tyr-2391 the chain carries Phosphotyrosine; by autocatalysis. Residues 2543–2568 (TVSTTDADTTGSPTTPTAPTTPTTTT) are disordered. Positions 2545–2568 (STTDADTTGSPTTPTAPTTPTTTT) are enriched in low complexity.

Belongs to the protein kinase superfamily. Tyr protein kinase family. Insulin receptor subfamily.

The protein resides in the cell membrane. It catalyses the reaction L-tyrosyl-[protein] + ATP = O-phospho-L-tyrosyl-[protein] + ADP + H(+). Functionally, receptor for an extracellular signal required to instruct a cell to differentiate into a R7 photoreceptor. The ligand for Sev is the Boss (Bride of Sevenless) protein. The polypeptide is Protein sevenless (sev) (Drosophila virilis (Fruit fly)).